A 435-amino-acid chain; its full sequence is MADSLIEHWPDELSGLFAFEVGFSGGLDSVALLSLLCEARARRPEIGLSAVHVHHGLSPNADAWAAHCQALCDSLRVPLRIERVHVRAGGGESVEAAAREARYQVYRRSASEVIALAHHQDDQAETILLQLLRGGGARALAAMPALRELAPGKLLWRPLLEIPRERLEAYVKARGFAWVDDESNLDTRYRRNLLRHDILPRLERALPHYRSHLARAAMLQADAAAILDEVAREDLQACRTENGLDCGSVLALSAPRRRQTLLAWLDALGWPAPEPGALLEFLRQAEYAERGASPVLRLRQGCLLRFADTLQAWPKAQSEPPASTALLWRGGDAQSLSEWGGELAWERRDAGVPAALLESGAYLAPRRGGEKLSARVGRREVKDLLREAGVPPLLRRRWPLLYGADGELLAVPGIAVSYRAAADGGWWPLWRPARP.

Residue 24-29 coordinates ATP; sequence SGGLDS.

This sequence belongs to the tRNA(Ile)-lysidine synthase family.

It is found in the cytoplasm. The catalysed reaction is cytidine(34) in tRNA(Ile2) + L-lysine + ATP = lysidine(34) in tRNA(Ile2) + AMP + diphosphate + H(+). In terms of biological role, ligates lysine onto the cytidine present at position 34 of the AUA codon-specific tRNA(Ile) that contains the anticodon CAU, in an ATP-dependent manner. Cytidine is converted to lysidine, thus changing the amino acid specificity of the tRNA from methionine to isoleucine. The sequence is that of tRNA(Ile)-lysidine synthase from Chromobacterium violaceum (strain ATCC 12472 / DSM 30191 / JCM 1249 / CCUG 213 / NBRC 12614 / NCIMB 9131 / NCTC 9757 / MK).